The primary structure comprises 207 residues: uncharacterized protein (207 aa).

This sequence belongs to the flavoredoxin family. Requires FMN as cofactor.

This is an uncharacterized protein from Bacillus subtilis (strain 168).